Here is a 430-residue protein sequence, read N- to C-terminus: 3-phosphoshikimate 1-carboxyvinyltransferase (430 aa).

Residues Lys23, Ser24, and Arg28 each contribute to the 3-phosphoshikimate site. Lys23 contacts phosphoenolpyruvate. Phosphoenolpyruvate-binding residues include Gly95 and Arg123. 3-phosphoshikimate is bound by residues Ser169, Gln171, Asp315, and Lys342. Gln171 provides a ligand contact to phosphoenolpyruvate. Asp315 serves as the catalytic Proton acceptor. Positions 346 and 388 each coordinate phosphoenolpyruvate.

It belongs to the EPSP synthase family. As to quaternary structure, monomer.

It localises to the cytoplasm. It catalyses the reaction 3-phosphoshikimate + phosphoenolpyruvate = 5-O-(1-carboxyvinyl)-3-phosphoshikimate + phosphate. The protein operates within metabolic intermediate biosynthesis; chorismate biosynthesis; chorismate from D-erythrose 4-phosphate and phosphoenolpyruvate: step 6/7. Catalyzes the transfer of the enolpyruvyl moiety of phosphoenolpyruvate (PEP) to the 5-hydroxyl of shikimate-3-phosphate (S3P) to produce enolpyruvyl shikimate-3-phosphate and inorganic phosphate. This is 3-phosphoshikimate 1-carboxyvinyltransferase from Streptococcus pyogenes serotype M2 (strain MGAS10270).